The sequence spans 540 residues: Putative cysteine ligase BshC (540 aa).

A coiled-coil region spans residues 455–491 (GKENLKRLIRVVNSFEEKVKQRHRKNNQVAIQQLQKI).

The protein belongs to the BshC family.

Functionally, involved in bacillithiol (BSH) biosynthesis. May catalyze the last step of the pathway, the addition of cysteine to glucosamine malate (GlcN-Mal) to generate BSH. In Desulforamulus reducens (strain ATCC BAA-1160 / DSM 100696 / MI-1) (Desulfotomaculum reducens), this protein is Putative cysteine ligase BshC.